The chain runs to 345 residues: uncharacterized protein (345 aa).

Solcar repeat units lie at residues 80 to 153 (MSFF…MKSR), 162 to 246 (SDPQ…LKLK), and 256 to 339 (NLAH…ILNF). 6 consecutive transmembrane segments (helical) span residues 83–103 (FEAL…LFPI), 128–148 (GLGS…TTYE), 220–240 (AGYG…FPIW), 262–282 (AISG…FDVV), 296–316 (VFTI…KGIV), and 319–339 (VLWL…ILNF).

It belongs to the mitochondrial carrier (TC 2.A.29) family.

It localises to the mitochondrion inner membrane. This is an uncharacterized protein from Schizosaccharomyces pombe (strain 972 / ATCC 24843) (Fission yeast).